The chain runs to 546 residues: Cysteine desulfurase SufS (546 aa).

The signal sequence occupies residues Met-1–Cys-22. Position 291 is an N6-(pyridoxal phosphate)lysine (Lys-291). The active-site Cysteine persulfide intermediate is Cys-497.

The protein belongs to the class-V pyridoxal-phosphate-dependent aminotransferase family. Csd subfamily. In terms of assembly, monomer. Interacts with SufE; interaction enhances cysteine desulfurase activity of SufS. Requires pyridoxal 5'-phosphate as cofactor. Proteolytically cleaved.

The protein resides in the plastid. It is found in the apicoplast. The enzyme catalyses (sulfur carrier)-H + L-cysteine = (sulfur carrier)-SH + L-alanine. Its pathway is cofactor biosynthesis; iron-sulfur cluster biosynthesis. In terms of biological role, catalyzes sulfur activation and mobilization in sulfur mobilization (SUF) pathway for iron-sulfur (Fe-S) cluster biogenesis. Active when in complex with a partner protein SufE. Required for apicoplast maintenance. Plays a role in the development of sporozoites in oocysts in mosquitoes. May provide sulfur for MNMA-mediated tRNA modifications. This is Cysteine desulfurase SufS from Plasmodium falciparum (isolate 3D7).